Here is a 439-residue protein sequence, read N- to C-terminus: Ornithine aminotransferase, mitochondrial (439 aa).

The transit peptide at 1 to 35 (MLSKLASLQTVAALRRGLRTSVASATSVATKKTEQ) directs the protein to the mitochondrion. N6-acetyllysine is present on residues lysine 49 and lysine 66. An N6-succinyllysine modification is found at lysine 102. An N6-acetyllysine; alternate modification is found at lysine 107. N6-succinyllysine; alternate is present on lysine 107. Lysine 292 bears the N6-(pyridoxal phosphate)lysine mark. An N6-acetyllysine; alternate modification is found at lysine 362. An N6-succinyllysine; alternate modification is found at lysine 362. N6-acetyllysine is present on residues lysine 386 and lysine 392. An N6-acetyllysine; alternate modification is found at lysine 405. At lysine 405 the chain carries N6-succinyllysine; alternate. Lysine 421 is subject to N6-acetyllysine.

As to quaternary structure, homohexamer. Pyridoxal 5'-phosphate is required as a cofactor. Expressed in the head and flagellum of epididymal sperm but not in testicular sperm (at protein level).

The protein resides in the mitochondrion matrix. The catalysed reaction is L-ornithine + 2-oxoglutarate = L-glutamate 5-semialdehyde + L-glutamate. It functions in the pathway amino-acid biosynthesis; L-proline biosynthesis; L-glutamate 5-semialdehyde from L-ornithine: step 1/1. Functionally, catalyzes the reversible interconversion of L-ornithine and 2-oxoglutarate to L-glutamate semialdehyde and L-glutamate. This Rattus norvegicus (Rat) protein is Ornithine aminotransferase, mitochondrial (Oat).